The primary structure comprises 123 residues: Small ribosomal subunit protein uS12cz/uS12cy (123 aa).

The protein belongs to the universal ribosomal protein uS12 family. As to quaternary structure, part of the 30S ribosomal subunit.

The protein localises to the plastid. It is found in the chloroplast. Functionally, with S4 and S5 plays an important role in translational accuracy. Located at the interface of the 30S and 50S subunits. The protein is Small ribosomal subunit protein uS12cz/uS12cy (rps12-A) of Phaseolus vulgaris (Kidney bean).